A 129-amino-acid chain; its full sequence is Putative reactive intermediate deaminase TdcF (129 aa).

At Lys58 the chain carries N6-(pyridoxal phosphate)lysine. Substrate-binding positions include Arg105–Cys107 and Glu120.

This sequence belongs to the RutC family. Homotrimer.

Its pathway is amino-acid degradation; L-threonine degradation via propanoate pathway. Functionally, may be a post-translational regulator that controls the metabolic fate of L-threonine or the potentially toxic intermediate 2-ketobutyrate. This is Putative reactive intermediate deaminase TdcF (tdcF) from Escherichia coli O6:H1 (strain CFT073 / ATCC 700928 / UPEC).